A 105-amino-acid polypeptide reads, in one-letter code: NADH-quinone oxidoreductase subunit K (105 aa).

A run of 3 helical transmembrane segments spans residues 4–24, 28–48, and 66–86; these read LTHY…GVIV, IIVI…SLVA, and LSIF…ALIV.

This sequence belongs to the complex I subunit 4L family. NDH-1 is composed of 14 different subunits. Subunits NuoA, H, J, K, L, M, N constitute the membrane sector of the complex.

It localises to the cell inner membrane. It catalyses the reaction a quinone + NADH + 5 H(+)(in) = a quinol + NAD(+) + 4 H(+)(out). NDH-1 shuttles electrons from NADH, via FMN and iron-sulfur (Fe-S) centers, to quinones in the respiratory chain. The immediate electron acceptor for the enzyme in this species is believed to be ubiquinone. Couples the redox reaction to proton translocation (for every two electrons transferred, four hydrogen ions are translocated across the cytoplasmic membrane), and thus conserves the redox energy in a proton gradient. In Akkermansia muciniphila (strain ATCC BAA-835 / DSM 22959 / JCM 33894 / BCRC 81048 / CCUG 64013 / CIP 107961 / Muc), this protein is NADH-quinone oxidoreductase subunit K.